The sequence spans 189 residues: Movement protein (189 aa).

The protein belongs to the tombusvirus/aureusvirus movement protein p22 family. Interacts with host protein HFI22. Phosphorylated.

It is found in the host membrane. In terms of biological role, transports viral genome to neighboring plant cells directly through plasmosdesmata, without any budding. The movement protein allows efficient cell to cell propagation, by bypassing the host cell wall barrier. Displays RNA-binding activity. The sequence is that of Movement protein from Capsicum annuum (Capsicum pepper).